Here is a 796-residue protein sequence, read N- to C-terminus: Lon protease 2 (796 aa).

Residues leucine 9–isoleucine 206 enclose the Lon N-terminal domain. An ATP-binding site is contributed by glycine 352–threonine 359. A Lon proteolytic domain is found at isoleucine 617–isoleucine 796. Active-site residues include serine 702 and lysine 745.

This sequence belongs to the peptidase S16 family. As to quaternary structure, homohexamer. Organized in a ring with a central cavity.

The protein localises to the cytoplasm. It catalyses the reaction Hydrolysis of proteins in presence of ATP.. ATP-dependent serine protease that mediates the selective degradation of mutant and abnormal proteins as well as certain short-lived regulatory proteins. Required for cellular homeostasis and for survival from DNA damage and developmental changes induced by stress. Degrades polypeptides processively to yield small peptide fragments that are 5 to 10 amino acids long. Binds to DNA in a double-stranded, site-specific manner. The chain is Lon protease 2 (lon2) from Borreliella burgdorferi (strain ATCC 35210 / DSM 4680 / CIP 102532 / B31) (Borrelia burgdorferi).